We begin with the raw amino-acid sequence, 664 residues long: MAIPDEFDIIVVGGGSTGCCIAGRLANLDDQNLTVALIEGGENNINNPWVYLPGVYPRNMRLDSKTATFYSSRPSKALNGRRAIVPCANILGGGSSINFLMYTRASASDYDDWESEGWSTDELLPLIKKIETYQRPCNNRDLHGFDGPIKVSFGNYTYPTCQDFLRAAESQGIPVVDDLEDFKTSHGAEHWLKWINRDLGRRSDSAHAYVHPTMRNKQSLFLITSTKCDKVIIEDGKAVAVRTVPMKPLNPKKPVSRTFRARKQIVISCGTISSPLVLQRSGIGAAHHLRSVGVKPIVDLPGVGENFQDHYCFFTPYYVKPDVPTFDDFVRGDPVAQKAAFDQWYSNKDGPLTTNGIEAGVKIRPTEEELATADEDFRRGYAEYFENKPDKPLMHYSVISGFFGDHTKIPNGKFMTMFHFLEYPFSRGFVRITSANPYDAPDFDPGFLNDERDLWPMVWAYKKSRETARRMESFAGEVTSHHPLFKVDSPARARDLDLETCSAYAGPKHLTANLYHGSWTVPIDKPTPKNDFHVTSNQVQLHSDIEYTEEDDEAIVNYIKEHTETTWHCLGTCSMAPREGSKIAPKGGVLDARLNVYGVQNLKVADLSVCPDNVGCNTYSTALTIGEKAATLVAEDLGYSGSDLDMTIPNFRLGTYEETGLARF.

8–39 serves as a coordination point for FAD; sequence DIIVVGGGSTGCCIAGRLANLDDQNLTVALIE. The active-site Proton acceptor is the histidine 568. Positions 662–664 match the Microbody targeting signal motif; sequence ARF.

It belongs to the GMC oxidoreductase family. Homooctamer. The cofactor is FAD.

The protein localises to the peroxisome matrix. It catalyses the reaction a primary alcohol + O2 = an aldehyde + H2O2. Its pathway is energy metabolism; methane degradation. In terms of biological role, catalyzes the oxidation of methanol to formaldehyde and hydrogen peroxide, the first step in the methanol utilization pathway of methylotrophic yeasts. This Pichia angusta (Yeast) protein is Alcohol oxidase (MOX).